A 350-amino-acid chain; its full sequence is Putative aminopeptidase MJ0555 (350 aa).

A divalent metal cation is bound by residues His62 and Asp175. Glu207 serves as the catalytic Proton acceptor. Residues Glu208, Asp230, and His321 each coordinate a divalent metal cation.

Belongs to the peptidase M42 family. Requires a divalent metal cation as cofactor.

This chain is Putative aminopeptidase MJ0555, found in Methanocaldococcus jannaschii (strain ATCC 43067 / DSM 2661 / JAL-1 / JCM 10045 / NBRC 100440) (Methanococcus jannaschii).